The chain runs to 177 residues: Ribulose bisphosphate carboxylase small subunit, chloroplastic 4 (177 aa).

A chloroplast-targeting transit peptide spans 1–56; the sequence is MASSMMASTAAAVARAGPAQTNMVPFNACRSSVPFPATRKANNDLSTLPSNGGRVS.

Belongs to the RuBisCO small chain family. Heterohexadecamer of 8 large and 8 small subunits.

The protein resides in the plastid. Its subcellular location is the chloroplast. In terms of biological role, ruBisCO catalyzes two reactions: the carboxylation of D-ribulose 1,5-bisphosphate, the primary event in carbon dioxide fixation, as well as the oxidative fragmentation of the pentose substrate. Both reactions occur simultaneously and in competition at the same active site. Although the small subunit is not catalytic it is essential for maximal activity. The chain is Ribulose bisphosphate carboxylase small subunit, chloroplastic 4 from Lemna gibba (Swollen duckweed).